Here is a 207-residue protein sequence, read N- to C-terminus: Large ribosomal subunit protein uL3 (207 aa).

Positions 126-149 (GPASHGSKKWHRRPGSIGQRKTPG) are disordered.

It belongs to the universal ribosomal protein uL3 family. Part of the 50S ribosomal subunit. Forms a cluster with proteins L14 and L19.

Its function is as follows. One of the primary rRNA binding proteins, it binds directly near the 3'-end of the 23S rRNA, where it nucleates assembly of the 50S subunit. The polypeptide is Large ribosomal subunit protein uL3 (Deinococcus geothermalis (strain DSM 11300 / CIP 105573 / AG-3a)).